Here is a 201-residue protein sequence, read N- to C-terminus: Retinol-binding protein 4 (201 aa).

Residues 1 to 18 form the signal peptide; it reads MEWVWALVLLAALGSAQA. 3 disulfides stabilise this stretch: Cys22–Cys178, Cys88–Cys192, and Cys138–Cys147. Position 116 (Gln116) interacts with substrate. The residue at position 139 (Arg139) is an Omega-N-methylarginine.

This sequence belongs to the calycin superfamily. Lipocalin family. Interacts with TTR. Interaction with TTR prevents its loss by filtration through the kidney glomeruli. Interacts with STRA6.

The protein resides in the secreted. Its function is as follows. Retinol-binding protein that mediates retinol transport in blood plasma. Delivers retinol from the liver stores to the peripheral tissues. Transfers the bound all-trans retinol to STRA6, that then facilitates retinol transport across the cell membrane. The sequence is that of Retinol-binding protein 4 (RBP4) from Sus scrofa (Pig).